Consider the following 1170-residue polypeptide: NPC intracellular sterol transporter 1-related protein 1 (1170 aa).

The first 19 residues, 1–19 (MNVLWIIALVGQLMRLVQG), serve as a signal peptide directing secretion. 8 cysteine pairs are disulfide-bonded: C23–C75, C29–C41, C64–C110, C76–C114, C98–C230, C101–C156, C223–C235, and C232–C239. N123, N145, and N178 each carry an N-linked (GlcNAc...) asparagine glycan. The helical transmembrane segment at 260 to 280 (LSVLIFYTICALFAFMWYYLC) threads the bilayer. N314 is a glycosylation site (N-linked (GlcNAc...) asparagine). The helical transmembrane segment at 341 to 361 (ILITTVFSIFVFSFIIFQYAT) threads the bilayer. N-linked (GlcNAc...) asparagine glycosylation occurs at N401. 2 cysteine pairs are disulfide-bonded: C438-C447 and C473-C480. A glycan (N-linked (GlcNAc...) asparagine) is linked at N513. A run of 6 helical transmembrane segments spans residues 556–576 (NDIS…TWAL), 585–605 (LLLG…AAGF), 616–636 (IIAE…IFLI), 667–687 (ILMS…VTMP), 698–718 (VSVI…LSLY), and 752–772 (IIII…EIQF). In terms of domain architecture, SSD spans 557 to 717 (DISTVAISYL…LTAYVSILSL (161 aa)). 4 disulfide bridges follow: C822–C828, C868–C925, C869–C891, and C879–C888. N-linked (GlcNAc...) asparagine glycosylation is found at N900 and N940. Helical transmembrane passes span 1000-1020 (LTLK…SVFL), 1027-1047 (FLLA…MALL), 1054-1074 (VSLV…VHIV), 1099-1119 (IGES…CVLA), and 1133-1153 (MWFT…PALL).

This sequence belongs to the patched family.

Its subcellular location is the vacuole membrane. Its function is as follows. Involved in sphingolipid trafficking. May recycle sphingolipids between cellular membranous compartments. In Saccharomyces cerevisiae (strain ATCC 204508 / S288c) (Baker's yeast), this protein is NPC intracellular sterol transporter 1-related protein 1.